A 93-amino-acid polypeptide reads, in one-letter code: uncharacterized protein (93 aa).

2 helical membrane-spanning segments follow: residues 8 to 28 and 54 to 74; these read FIGI…LLAS and ACFL…YLIL.

Its subcellular location is the cell membrane. This is an uncharacterized protein from Methanocaldococcus jannaschii (strain ATCC 43067 / DSM 2661 / JAL-1 / JCM 10045 / NBRC 100440) (Methanococcus jannaschii).